The sequence spans 192 residues: Small ribosomal subunit protein uS4B (192 aa).

A phosphoserine mark is found at Ser-89 and Ser-179. Residues 107–181 (RRLQTQVFKL…CKRKRLRSQQ (75 aa)) enclose the S4 RNA-binding domain. Residues 166–192 (GGRPGRCKRKRLRSQQEGGEGEEAEEE) are disordered.

The protein belongs to the universal ribosomal protein uS4 family. Component of the small ribosomal subunit (SSU). Mature yeast ribosomes consist of a small (40S) and a large (60S) subunit. The 40S small subunit contains 1 molecule of ribosomal RNA (18S rRNA) and at least 33 different proteins. The large 60S subunit contains 3 rRNA molecules (25S, 5.8S and 5S rRNA) and at least 46 different proteins. Interacts with snoRNA U3. uS11 interacts with MPP10. Component of the ribosomal small subunit (SSU) processome composed of at least 40 protein subunits and snoRNA U3.

The protein localises to the cytoplasm. Its function is as follows. Component of the ribosome, a large ribonucleoprotein complex responsible for the synthesis of proteins in the cell. The small ribosomal subunit (SSU) binds messenger RNAs (mRNAs) and translates the encoded message by selecting cognate aminoacyl-transfer RNA (tRNA) molecules. The large subunit (LSU) contains the ribosomal catalytic site termed the peptidyl transferase center (PTC), which catalyzes the formation of peptide bonds, thereby polymerizing the amino acids delivered by tRNAs into a polypeptide chain. The nascent polypeptides leave the ribosome through a tunnel in the LSU and interact with protein factors that function in enzymatic processing, targeting, and the membrane insertion of nascent chains at the exit of the ribosomal tunnel. uS4 is involved in nucleolar processing of pre-18S ribosomal RNA and ribosome assembly. The protein is Small ribosomal subunit protein uS4B (rps902) of Schizosaccharomyces pombe (strain 972 / ATCC 24843) (Fission yeast).